The following is a 381-amino-acid chain: tRNA pseudouridine synthase D (381 aa).

The Nucleophile role is filled by Asp81. Residues 160-335 enclose the TRUD domain; it reads GMPNYFGSQR…TLGSRRFFWV (176 aa).

Belongs to the pseudouridine synthase TruD family.

It carries out the reaction uridine(13) in tRNA = pseudouridine(13) in tRNA. Responsible for synthesis of pseudouridine from uracil-13 in transfer RNAs. This Helicobacter pylori (strain J99 / ATCC 700824) (Campylobacter pylori J99) protein is tRNA pseudouridine synthase D.